We begin with the raw amino-acid sequence, 873 residues long: Zinc fingers and homeoboxes protein 1 (873 aa).

Residues 24 to 63 (LISDLDEGPPVLTPVENTRAESISSDEEVHESVDSDNQQN) form a disordered region. Residue Thr-36 is modified to Phosphothreonine. Phosphoserine is present on residues Ser-45, Ser-47, and Ser-48. C2H2-type zinc fingers lie at residues 70–93 (YECK…DSEH) and 102–125 (YVCV…LKYH). Lys-159 participates in a covalent cross-link: Glycyl lysine isopeptide (Lys-Gly) (interchain with G-Cter in SUMO2). The interval 200–236 (HNSVEDVPEEKENEIKPDREEIVENPSSSASESNTST) is disordered. Ser-202 carries the post-translational modification Phosphoserine. Residues 212 to 221 (NEIKPDREEI) show a composition bias toward basic and acidic residues. A compositionally biased stretch (low complexity) spans 223–236 (ENPSSSASESNTST). The segment at 272–432 (NSNLIPKVLI…QNNIQKSQVP (161 aa)) is required for dimerization. The tract at residues 272–564 (NSNLIPKVLI…AQPKQSWNPF (293 aa)) is required for interaction with NFYA. The homeobox 1 DNA-binding region spans 284–346 (NSIPTYNAAL…LKHGVSWTPE (63 aa)). Glycyl lysine isopeptide (Lys-Gly) (interchain with G-Cter in SUMO2) cross-links involve residues Lys-441, Lys-454, Lys-485, and Lys-629. 2 consecutive DNA-binding regions (homeobox) follow at residues 464 to 526 (SFGI…KSNQ) and 569 to 630 (PQKF…EEKM). Disordered regions lie at residues 626–667 (KEEK…ICKK) and 732–769 (SSMN…INNW). At Ser-648 the chain carries Phosphoserine. The homeobox 4 DNA-binding region spans 660-722 (STGKICKKTP…YAWKNGNLKW (63 aa)). A required for nuclear localization region spans residues 734-768 (MNGLSSLRKRGRGRPKGRGRGRPRGRPRGSKRINN). Basic residues predominate over residues 740-764 (LRKRGRGRPKGRGRGRPRGRPRGSK). Ser-774 bears the Phosphoserine mark. Positions 777–832 (KFKTGTAILKDYYLKHKFLNEQDLDELVNKSHMGYEQVREWFAERQRRSELGIELF) form a DNA-binding region, homeobox 5. Residues 829–873 (IELFEENEEEDEVIDDQEEDEEETDDSDTWEPPRHVKRKLSKSDD) form a disordered region. Acidic residues predominate over residues 831 to 857 (LFEENEEEDEVIDDQEEDEEETDDSDT). The segment at 831–873 (LFEENEEEDEVIDDQEEDEEETDDSDTWEPPRHVKRKLSKSDD) is required for repressor activity. Residues 863-873 (HVKRKLSKSDD) show a composition bias toward basic residues.

The protein belongs to the ZHX family. In terms of assembly, forms homodimers. Heterodimer (via HD1 domain) with ZHX2 (via HD1 domain). Also forms a heterodimer with ZHX3 which is a prerequisite for repressor activity. Interacts with ATF7IP and NFYA. Interacts (via homeobox domains) with DNMT3B (via PWWP domain).

The protein resides in the nucleus. Its function is as follows. Acts as a transcriptional repressor. Increases DNMT3B-mediated repressive transcriptional activity when DNMT3B is tethered to DNA. May link molecule between DNMT3B and other co-repressor proteins. This Pan troglodytes (Chimpanzee) protein is Zinc fingers and homeoboxes protein 1 (ZHX1).